Reading from the N-terminus, the 483-residue chain is Regulatory protein ViaA (483 aa).

The protein belongs to the ViaA family. As to quaternary structure, homodimer. Interacts with RavA.

It is found in the cytoplasm. Component of the RavA-ViaA chaperone complex, which may act on the membrane to optimize the function of some of the respiratory chains. ViaA stimulates the ATPase activity of RavA. The polypeptide is Regulatory protein ViaA (Salmonella dublin (strain CT_02021853)).